A 246-amino-acid chain; its full sequence is Large ribosomal subunit protein uL2 (246 aa).

Residues 196–226 (MSPYAHPHGGGSHQKGGTPVPKTAPPGQKVG) form a disordered region.

The protein belongs to the universal ribosomal protein uL2 family. Part of the 50S ribosomal subunit. Forms a bridge to the 30S subunit in the 70S ribosome.

One of the primary rRNA binding proteins. Required for association of the 30S and 50S subunits to form the 70S ribosome, for tRNA binding and peptide bond formation. It has been suggested to have peptidyltransferase activity; this is somewhat controversial. Makes several contacts with the 16S rRNA in the 70S ribosome. In Pyrobaculum arsenaticum (strain DSM 13514 / JCM 11321 / PZ6), this protein is Large ribosomal subunit protein uL2.